A 557-amino-acid polypeptide reads, in one-letter code: Formate--tetrahydrofolate ligase (557 aa).

65-72 (TPAGEGKT) provides a ligand contact to ATP.

The protein belongs to the formate--tetrahydrofolate ligase family. Homotetramer.

It carries out the reaction (6S)-5,6,7,8-tetrahydrofolate + formate + ATP = (6R)-10-formyltetrahydrofolate + ADP + phosphate. It functions in the pathway one-carbon metabolism; tetrahydrofolate interconversion. The chain is Formate--tetrahydrofolate ligase (fhs) from Methylorubrum extorquens (strain ATCC 14718 / DSM 1338 / JCM 2805 / NCIMB 9133 / AM1) (Methylobacterium extorquens).